The chain runs to 368 residues: Probable pectate lyase 4 (368 aa).

The signal sequence occupies residues methionine 1 to serine 25. N-linked (GlcNAc...) asparagine glycosylation occurs at asparagine 27. Residues aspartate 167, aspartate 191, and aspartate 195 each coordinate Ca(2+). Residue arginine 247 is part of the active site.

The protein belongs to the polysaccharide lyase 1 family. Ca(2+) is required as a cofactor.

The enzyme catalyses Eliminative cleavage of (1-&gt;4)-alpha-D-galacturonan to give oligosaccharides with 4-deoxy-alpha-D-galact-4-enuronosyl groups at their non-reducing ends.. Its pathway is glycan metabolism; pectin degradation; 2-dehydro-3-deoxy-D-gluconate from pectin: step 2/5. The chain is Probable pectate lyase 4 from Arabidopsis thaliana (Mouse-ear cress).